A 172-amino-acid polypeptide reads, in one-letter code: Major exported protein (172 aa).

Belongs to the hcp1 family.

It is found in the secreted. The chain is Major exported protein (hcpA) from Pseudomonas aeruginosa (strain ATCC 15692 / DSM 22644 / CIP 104116 / JCM 14847 / LMG 12228 / 1C / PRS 101 / PAO1).